A 143-amino-acid chain; its full sequence is Putative pre-16S rRNA nuclease (143 aa).

The protein belongs to the YqgF nuclease family.

It localises to the cytoplasm. Its function is as follows. Could be a nuclease involved in processing of the 5'-end of pre-16S rRNA. This chain is Putative pre-16S rRNA nuclease, found in Lactobacillus johnsonii (strain CNCM I-12250 / La1 / NCC 533).